Here is a 225-residue protein sequence, read N- to C-terminus: Cbp/p300-interacting transactivator 2 (225 aa).

This sequence belongs to the CITED family.

It is found in the nucleus. Transcriptional coactivator or corepressor of the p300/CBP-mediated transcription complex. May be involved in sex determination, early gonad development, left-right patterning during embryogenesis and differentiation of the adrenal cortex. This Xenopus laevis (African clawed frog) protein is Cbp/p300-interacting transactivator 2 (cited2).